The following is a 227-amino-acid chain: Uracil-DNA glycosylase (227 aa).

The active-site Proton acceptor is D68.

The protein belongs to the uracil-DNA glycosylase (UDG) superfamily. UNG family.

Its subcellular location is the cytoplasm. The catalysed reaction is Hydrolyzes single-stranded DNA or mismatched double-stranded DNA and polynucleotides, releasing free uracil.. Excises uracil residues from the DNA which can arise as a result of misincorporation of dUMP residues by DNA polymerase or due to deamination of cytosine. The protein is Uracil-DNA glycosylase of Mycobacterium avium (strain 104).